The primary structure comprises 245 residues: 2,3-bisphosphoglycerate-dependent phosphoglycerate mutase (245 aa).

Residues 8–15 (RHGQSLWN), 21–22 (TG), Arg-60, 87–90 (ERHY), Lys-98, 114–115 (RR), and 183–184 (GN) contribute to the substrate site. His-9 (tele-phosphohistidine intermediate) is an active-site residue. Residue Glu-87 is the Proton donor/acceptor of the active site.

Belongs to the phosphoglycerate mutase family. BPG-dependent PGAM subfamily.

The enzyme catalyses (2R)-2-phosphoglycerate = (2R)-3-phosphoglycerate. The protein operates within carbohydrate degradation; glycolysis; pyruvate from D-glyceraldehyde 3-phosphate: step 3/5. Functionally, catalyzes the interconversion of 2-phosphoglycerate and 3-phosphoglycerate. The polypeptide is 2,3-bisphosphoglycerate-dependent phosphoglycerate mutase (Bacillus cytotoxicus (strain DSM 22905 / CIP 110041 / 391-98 / NVH 391-98)).